Reading from the N-terminus, the 140-residue chain is 3-hydroxyacyl-[acyl-carrier-protein] dehydratase FabZ (140 aa).

Histidine 48 is a catalytic residue.

The protein belongs to the thioester dehydratase family. FabZ subfamily.

The protein localises to the cytoplasm. The catalysed reaction is a (3R)-hydroxyacyl-[ACP] = a (2E)-enoyl-[ACP] + H2O. Involved in unsaturated fatty acids biosynthesis. Catalyzes the dehydration of short chain beta-hydroxyacyl-ACPs and long chain saturated and unsaturated beta-hydroxyacyl-ACPs. The chain is 3-hydroxyacyl-[acyl-carrier-protein] dehydratase FabZ from Halalkalibacterium halodurans (strain ATCC BAA-125 / DSM 18197 / FERM 7344 / JCM 9153 / C-125) (Bacillus halodurans).